The sequence spans 84 residues: Kunitz-type serine protease inhibitor B4 (84 aa).

The signal sequence occupies residues 1–24; the sequence is MSSGGLLLLLGLLTLWAELTPISG. The BPTI/Kunitz inhibitor domain maps to 31 to 81; it reads CNLAPESGRCRGHLRRIYYNLESNKCEVFFYGGCGGNDNNFSTWDECRHTC. Disulfide bonds link C31–C81, C40–C64, and C56–C77. Residue N70 is glycosylated (N-linked (GlcNAc...) asparagine).

It belongs to the venom Kunitz-type family. As to expression, expressed by the venom gland.

It is found in the secreted. Functionally, serine protease inhibitor that inhibits plasmin and trypsin. This is Kunitz-type serine protease inhibitor B4 from Daboia siamensis (Eastern Russel's viper).